Here is a 457-residue protein sequence, read N- to C-terminus: Exodeoxyribonuclease 7 large subunit (457 aa).

The protein belongs to the XseA family. Heterooligomer composed of large and small subunits.

It is found in the cytoplasm. It catalyses the reaction Exonucleolytic cleavage in either 5'- to 3'- or 3'- to 5'-direction to yield nucleoside 5'-phosphates.. Its function is as follows. Bidirectionally degrades single-stranded DNA into large acid-insoluble oligonucleotides, which are then degraded further into small acid-soluble oligonucleotides. In Cronobacter sakazakii (strain ATCC BAA-894) (Enterobacter sakazakii), this protein is Exodeoxyribonuclease 7 large subunit.